Reading from the N-terminus, the 751-residue chain is Zinc finger protein 184 (751 aa).

The region spanning 28 to 99 (VTFKDVIVDF…EPSIPVGTCA (72 aa)) is the KRAB domain. S117, S122, and S199 each carry phosphoserine. Over residues 191 to 202 (SNLVTQEPSPEE) the composition is skewed to polar residues. The disordered stretch occupies residues 191–212 (SNLVTQEPSPEETSTKRSIKQN). K206 is covalently cross-linked (Glycyl lysine isopeptide (Lys-Gly) (interchain with G-Cter in SUMO2)). C2H2-type zinc fingers lie at residues 222–244 (CKCN…QRTH), 250–272 (YKCN…QRIH), 278–300 (YKCD…QRIH), 306–328 (YKCD…QRIH), 334–356 (YTCN…QKIH), 362–384 (FKCD…QKIH), 390–412 (YKCN…HMIH), 418–440 (YECN…QKTH), 446–468 (YDCA…LKIH), 474–496 (YKCN…RRIH), 502–524 (FECS…QKTH), 530–552 (YECK…ERIH), 558–580 (YQCH…RKIH), 586–608 (YKCN…KRIH), 614–636 (YECA…QKTH), 642–664 (YQCN…QRIH), 670–692 (YKCN…QNTH), 698–720 (YNCN…QRIH), and 726–748 (FGCN…QRLH).

This sequence belongs to the krueppel C2H2-type zinc-finger protein family. As to expression, predominant expression in testis.

Its subcellular location is the nucleus. Functionally, may be involved in transcriptional regulation. This Homo sapiens (Human) protein is Zinc finger protein 184 (ZNF184).